Here is an 84-residue protein sequence, read N- to C-terminus: Cytochrome b559 subunit alpha (84 aa).

The helical transmembrane segment at 24 to 38 (IIHAVTLPAIFIAGF) threads the bilayer. His-26 serves as a coordination point for heme.

It belongs to the PsbE/PsbF family. As to quaternary structure, heterodimer of an alpha subunit and a beta subunit. PSII is composed of 1 copy each of membrane proteins PsbA, PsbB, PsbC, PsbD, PsbE, PsbF, PsbH, PsbI, PsbJ, PsbK, PsbL, PsbM, PsbT, PsbX, PsbY, Psb30/Ycf12, peripheral proteins PsbO, CyanoQ (PsbQ), PsbU, PsbV and a large number of cofactors. It forms dimeric complexes. The cofactor is heme b.

Its subcellular location is the cellular thylakoid membrane. Its function is as follows. This b-type cytochrome is tightly associated with the reaction center of photosystem II (PSII). PSII is a light-driven water:plastoquinone oxidoreductase that uses light energy to abstract electrons from H(2)O, generating O(2) and a proton gradient subsequently used for ATP formation. It consists of a core antenna complex that captures photons, and an electron transfer chain that converts photonic excitation into a charge separation. The sequence is that of Cytochrome b559 subunit alpha from Prochlorococcus marinus subsp. pastoris (strain CCMP1986 / NIES-2087 / MED4).